Consider the following 205-residue polypeptide: Large ribosomal subunit protein uL3 (205 aa).

Belongs to the universal ribosomal protein uL3 family. In terms of assembly, part of the 50S ribosomal subunit. Forms a cluster with proteins L14 and L19.

Its function is as follows. One of the primary rRNA binding proteins, it binds directly near the 3'-end of the 23S rRNA, where it nucleates assembly of the 50S subunit. This Bacteroides fragilis (strain ATCC 25285 / DSM 2151 / CCUG 4856 / JCM 11019 / LMG 10263 / NCTC 9343 / Onslow / VPI 2553 / EN-2) protein is Large ribosomal subunit protein uL3.